We begin with the raw amino-acid sequence, 430 residues long: Aspartate aminotransferase, mitochondrial (430 aa).

The transit peptide at 1 to 29 directs the protein to the mitochondrion; the sequence is MALLHSGRFLSGVAAAFHPGLAAAASARA. Thr-48 bears the Phosphothreonine mark. Lys-59 is modified (N6-acetyllysine). Substrate is bound at residue Gly-65. At Lys-73 the chain carries N6-acetyllysine; alternate. An N6-succinyllysine; alternate modification is found at Lys-73. Lys-82 carries the post-translational modification N6-acetyllysine. Lys-90 bears the N6-acetyllysine; alternate mark. Lys-90 is modified (N6-succinyllysine; alternate). At Tyr-96 the chain carries 3'-nitrotyrosine; alternate. Phosphotyrosine; alternate is present on Tyr-96. N6-acetyllysine; alternate occurs at positions 107 and 122. An N6-succinyllysine; alternate mark is found at Lys-107 and Lys-122. Ser-143 is modified (phosphoserine). Lys-159 bears the N6-acetyllysine; alternate mark. Lys-159 is subject to N6-succinyllysine; alternate. Position 162 (Trp-162) interacts with substrate. Position 185 is an N6-acetyllysine; alternate (Lys-185). At Lys-185 the chain carries N6-succinyllysine; alternate. Position 215 (Asn-215) interacts with substrate. Lys-227 is subject to N6-succinyllysine. N6-acetyllysine is present on Lys-234. N6-acetyllysine; alternate is present on residues Lys-279 and Lys-296. An N6-(pyridoxal phosphate)lysine; alternate modification is found at Lys-279. Position 296 is an N6-succinyllysine; alternate (Lys-296). Lys-302 is subject to N6-acetyllysine. The residue at position 309 (Lys-309) is an N6-acetyllysine; alternate. Lys-309 bears the N6-succinyllysine; alternate mark. Arg-313 is subject to Asymmetric dimethylarginine. Lys-338 carries the post-translational modification N6-acetyllysine; alternate. At Lys-338 the chain carries N6-succinyllysine; alternate. Residue Lys-345 is modified to N6-acetyllysine. Position 363 is an N6-acetyllysine; alternate (Lys-363). Lys-363 bears the N6-succinyllysine; alternate mark. N6-acetyllysine is present on residues Lys-364 and Lys-387. An N6-acetyllysine; alternate mark is found at Lys-396 and Lys-404. An N6-succinyllysine; alternate mark is found at Lys-396 and Lys-404. Arg-407 contacts substrate.

The protein belongs to the class-I pyridoxal-phosphate-dependent aminotransferase family. In terms of assembly, homodimer. The cofactor is pyridoxal 5'-phosphate.

It localises to the mitochondrion matrix. It is found in the cell membrane. The catalysed reaction is L-aspartate + 2-oxoglutarate = oxaloacetate + L-glutamate. It catalyses the reaction L-kynurenine + 2-oxoglutarate = 4-(2-aminophenyl)-2,4-dioxobutanoate + L-glutamate. Catalyzes the irreversible transamination of the L-tryptophan metabolite L-kynurenine to form kynurenic acid (KA). As a member of the malate-aspartate shuttle, it has a key role in the intracellular NAD(H) redox balance. Is important for metabolite exchange between mitochondria and cytosol, and for amino acid metabolism. Facilitates cellular uptake of long-chain free fatty acids. This chain is Aspartate aminotransferase, mitochondrial (GOT2), found in Bos taurus (Bovine).